A 933-amino-acid polypeptide reads, in one-letter code: Neuronal PAS domain-containing protein 4A (933 aa).

A basic motif; degenerate region spans residues M1–R13. The region spanning M1–S53 is the bHLH domain. The helix-loop-helix motif stretch occupies residues D14–S53. PAS domains are found at residues S74–D148 and T220–G290. Positions A295–T334 constitute a PAC domain. Positions Q361–C398 are enriched in polar residues. 3 disordered regions span residues Q361–P451, G514–L573, and D750–P776. Low complexity-rich tracts occupy residues S399–S411, E440–P451, G538–Q560, and L751–P769.

Efficient DNA binding requires dimerization with another bHLH protein. In terms of tissue distribution, brain-specific.

It localises to the nucleus. Transcription factor expressed in neurons of the brain that regulates the excitatory-inhibitory balance within neural circuits and is required for contextual memory in the hippocampus. Plays a key role in the structural and functional plasticity of neurons. Acts as an early-response transcription factor in both excitatory and inhibitory neurons, where it induces distinct but overlapping sets of late-response genes in these two types of neurons, allowing the synapses that form on inhibitory and excitatory neurons to be modified by neuronal activity in a manner specific to their function within a circuit, thereby facilitating appropriate circuit responses to sensory experience. The sequence is that of Neuronal PAS domain-containing protein 4A (npas4a) from Danio rerio (Zebrafish).